We begin with the raw amino-acid sequence, 283 residues long: Pseudokinase OPG198 (283 aa).

ATP-binding residues include M1 and K30. One can recognise a Protein kinase domain in the interval 1–283 (MESFKYCFDN…DRLRKLFIQD (283 aa)).

Belongs to the protein kinase superfamily. Ser/Thr protein kinase family. Poxviruses subfamily. Interacts with B1/VPK1. Interacts with host VRK1. Interacts with host VRK2.

Its subcellular location is the host nucleus. Both catalytically active kinases B1/VPK1 and host VRK2 repress B12 inhibitory activity in a B1/VPK1 deletion mutant strain. Functionally, pseudokinase that plays a role in viral DNA replication repression by activating the antiviral protein BANF1 and inhibiting the activity of host VRK1, a cellular modulator of BANF1. The polypeptide is Pseudokinase OPG198 (OPG198) (Vaccinia virus (strain Western Reserve) (VACV)).